We begin with the raw amino-acid sequence, 620 residues long: 1-deoxy-D-xylulose-5-phosphate synthase (620 aa).

Thiamine diphosphate-binding positions include H80 and 121–123 (GHS). Position 152 (D152) interacts with Mg(2+). Thiamine diphosphate-binding positions include 153–154 (GA), N181, Y288, and E370. Mg(2+) is bound at residue N181.

It belongs to the transketolase family. DXPS subfamily. As to quaternary structure, homodimer. Requires Mg(2+) as cofactor. Thiamine diphosphate is required as a cofactor.

The enzyme catalyses D-glyceraldehyde 3-phosphate + pyruvate + H(+) = 1-deoxy-D-xylulose 5-phosphate + CO2. It functions in the pathway metabolic intermediate biosynthesis; 1-deoxy-D-xylulose 5-phosphate biosynthesis; 1-deoxy-D-xylulose 5-phosphate from D-glyceraldehyde 3-phosphate and pyruvate: step 1/1. In terms of biological role, catalyzes the acyloin condensation reaction between C atoms 2 and 3 of pyruvate and glyceraldehyde 3-phosphate to yield 1-deoxy-D-xylulose-5-phosphate (DXP). This chain is 1-deoxy-D-xylulose-5-phosphate synthase, found in Escherichia coli O7:K1 (strain IAI39 / ExPEC).